Reading from the N-terminus, the 592-residue chain is Arginine--tRNA ligase (592 aa).

Positions 131–141 (ANPTGPMHVGH) match the 'HIGH' region motif.

The protein belongs to the class-I aminoacyl-tRNA synthetase family. As to quaternary structure, monomer.

The protein localises to the cytoplasm. It carries out the reaction tRNA(Arg) + L-arginine + ATP = L-arginyl-tRNA(Arg) + AMP + diphosphate. This is Arginine--tRNA ligase from Rhodospirillum rubrum (strain ATCC 11170 / ATH 1.1.1 / DSM 467 / LMG 4362 / NCIMB 8255 / S1).